Reading from the N-terminus, the 206-residue chain is MPTVGVFNKEGNKVADMELNENVFAAEINEYALHQVVVALLANKRQGTQSTKTRSEVRGGGIKPWRQKGTGRARQGSIRSPQWIKGGIVFAPKPRDYRVSVPKSMRKVAMKSALTSKVQDNQMIVLDSLNFEAPKTKSMIEMLKALEANKALIITAESNEVVYKSARNIQGISVIPANNINVYDLLKYEKLIITKDAVSKIEEVYA.

Positions 47–77 (GTQSTKTRSEVRGGGIKPWRQKGTGRARQGS) are disordered.

The protein belongs to the universal ribosomal protein uL4 family. Part of the 50S ribosomal subunit.

One of the primary rRNA binding proteins, this protein initially binds near the 5'-end of the 23S rRNA. It is important during the early stages of 50S assembly. It makes multiple contacts with different domains of the 23S rRNA in the assembled 50S subunit and ribosome. Functionally, forms part of the polypeptide exit tunnel. In Clostridium beijerinckii (strain ATCC 51743 / NCIMB 8052) (Clostridium acetobutylicum), this protein is Large ribosomal subunit protein uL4.